The chain runs to 285 residues: NADPH-dependent 7-cyano-7-deazaguanine reductase (285 aa).

Substrate is bound at residue 91-93 (IES). Position 93-94 (93-94 (SK)) interacts with NADPH. The Thioimide intermediate role is filled by Cys-193. The active-site Proton donor is the Asp-200. 232–233 (HE) contributes to the substrate binding site. 261 to 262 (RG) provides a ligand contact to NADPH.

Belongs to the GTP cyclohydrolase I family. QueF type 2 subfamily. As to quaternary structure, homodimer.

Its subcellular location is the cytoplasm. It catalyses the reaction 7-aminomethyl-7-carbaguanine + 2 NADP(+) = 7-cyano-7-deazaguanine + 2 NADPH + 3 H(+). The protein operates within tRNA modification; tRNA-queuosine biosynthesis. In terms of biological role, catalyzes the NADPH-dependent reduction of 7-cyano-7-deazaguanine (preQ0) to 7-aminomethyl-7-deazaguanine (preQ1). In Shewanella baltica (strain OS223), this protein is NADPH-dependent 7-cyano-7-deazaguanine reductase.